Here is a 444-residue protein sequence, read N- to C-terminus: MAVTTRLTWLHEKILQNHFGGKRLSLLYKGSVHGFRNGVLLDRCCNQGPTLTVIYSEDHIIGAYAEESYQEGKYASIILFALQDTKISEWKLGLCTPETLFCCDVTKYNSPTNFQIDGRNRKVIMDLKTMENLGLAQNCTISIQDYEVFRCEDSLDERKIKGVIELRKSLLSALRTYEPYGSLVQQIRILLLGPIGAGKSSFFNSVRSVFQGHVTHQALVGTNTTGISEKYRTYSIRDGKDGKYLPFILCDSLGLSEKEGGLCRDDIFYILNGNIRDRYQFNPMESIKLNHHDYIDSPSLKDRIHCVAFVFDASSIQYFSSQMIVKIKRIRRELVNAGVVHVALLTHVDSMDLITKGDLIEIERCEPVRSKLEEVQRKLGFALSDISVVSNYSSEWELDPVKDVLILSALRRMLWAADDFLEDLPFEQIGNLREEIINCAQGKK.

Positions 1–152 (MAVTTRLTWL…IQDYEVFRCE (152 aa)) constitute a TLDc domain.

The protein belongs to the IFI44 family.

The protein resides in the cytoplasm. This protein aggregates to form microtubular structures. The protein is Interferon-induced protein 44 (IFI44) of Homo sapiens (Human).